Here is a 259-residue protein sequence, read N- to C-terminus: Putative pyrophosphorylase ModD (259 aa).

This sequence belongs to the NadC/ModD family.

The sequence is that of Putative pyrophosphorylase ModD (modD) from Rhodobacter capsulatus (Rhodopseudomonas capsulata).